A 119-amino-acid chain; its full sequence is Autophagy-related protein 8 (119 aa).

G116 carries the Phosphatidylethanolamine amidated glycine lipid modification. Positions 117 to 119 (EAL) are cleaved as a propeptide — removed in mature form.

Belongs to the ATG8 family. In terms of assembly, conjugation to phosphatidylethanolamine (PE) leads to homodimerization. Interacts with ATG1, ATG3, ATG4, ATG7 and ATG12. Post-translationally, the C-terminal Glu-117, Ala-118 and Leu-119 residues of ATG8 are removed by ATG4 to expose Gly-116 at the C-terminus. This Gly-116 forms then a thioester bond with ATG7 (E1-like activating enzyme) before being transferred to ATG3 (the specific E2 conjugating enzyme), in order to be finally amidated with phosphatidylethanolamine. This lipid modification anchors ATG8 to membranes and can be reversed by ATG4, releasing soluble ATG8.

It localises to the cytoplasmic vesicle. The protein localises to the cvt vesicle membrane. It is found in the autophagosome membrane. The protein resides in the vacuole membrane. Its function is as follows. Ubiquitin-like modifier involved in cytoplasm to vacuole transport (Cvt) vesicles and autophagosome formation. With ATG4, mediates the delivery of the vesicles and autophagosomes to the vacuole via the microtubule cytoskeleton. Required for selective autophagic degradation of the nucleus (nucleophagy) as well as for mitophagy which contributes to regulate mitochondrial quantity and quality by eliminating the mitochondria to a basal level to fulfill cellular energy requirements and preventing excess ROS production. Also participates in membrane fusion events that take place in the early secretory pathway. Also involved in endoplasmic reticulum-specific autophagic process and is essential for the survival of cells subjected to severe ER stress. The ATG8-PE conjugate mediates tethering between adjacent membranes and stimulates membrane hemifusion, leading to expansion of the autophagosomal membrane during autophagy. Moreover not only conjugation, but also subsequent ATG8-PE deconjugation is an important step required to facilitate multiple events during macroautophagy, and especially for efficient autophagosome biogenesis, the assembly of ATG9-containing tubulovesicular clusters into phagophores/autophagosomes, and for the disassembly of PAS-associated ATG components. Autophagy is required for conidiation, aerial mycelial growth, and pseudothecia formation, but not for host invasion. The polypeptide is Autophagy-related protein 8 (Cochliobolus heterostrophus (strain C4 / ATCC 48331 / race T) (Southern corn leaf blight fungus)).